The following is a 179-amino-acid chain: Large ribosomal subunit protein uL6 (179 aa).

It belongs to the universal ribosomal protein uL6 family. Part of the 50S ribosomal subunit.

Its function is as follows. This protein binds to the 23S rRNA, and is important in its secondary structure. It is located near the subunit interface in the base of the L7/L12 stalk, and near the tRNA binding site of the peptidyltransferase center. The sequence is that of Large ribosomal subunit protein uL6 from Fructilactobacillus sanfranciscensis (Lactobacillus sanfranciscensis).